The chain runs to 142 residues: Hemoglobin A subunit alpha-2 (142 aa).

Residues 2–142 enclose the Globin domain; the sequence is VLTAGDKANV…VAQNLTSKYR (141 aa). Residue His-59 participates in O2 binding. Heme b is bound at residue His-88.

The protein belongs to the globin family. Tetramer of alpha-1, alpha-2 and two identical beta chains. Red blood cells.

Functionally, involved in oxygen transport from the lung to the various peripheral tissues. The polypeptide is Hemoglobin A subunit alpha-2 (Aldabrachelys gigantea (Aldabra giant tortoise)).